Reading from the N-terminus, the 68-residue chain is DNA-directed RNA polymerase subunit omega (68 aa).

The protein belongs to the RNA polymerase subunit omega family. In terms of assembly, the RNAP catalytic core consists of 2 alpha, 1 beta, 1 beta' and 1 omega subunit. When a sigma factor is associated with the core the holoenzyme is formed, which can initiate transcription.

The catalysed reaction is RNA(n) + a ribonucleoside 5'-triphosphate = RNA(n+1) + diphosphate. Promotes RNA polymerase assembly. Latches the N- and C-terminal regions of the beta' subunit thereby facilitating its interaction with the beta and alpha subunits. The chain is DNA-directed RNA polymerase subunit omega from Ruminiclostridium cellulolyticum (strain ATCC 35319 / DSM 5812 / JCM 6584 / H10) (Clostridium cellulolyticum).